Consider the following 263-residue polypeptide: Dermonecrotic toxin SpaSicTox-betaIF1 (263 aa).

E15 and D17 together coordinate Mg(2+). The active-site Nucleophile is H31. 2 cysteine pairs are disulfide-bonded: C35-C41 and C37-C179. D75 lines the Mg(2+) pocket.

The protein belongs to the arthropod phospholipase D family. Class II subfamily. Requires Mg(2+) as cofactor. In terms of tissue distribution, expressed by the venom gland.

Its subcellular location is the secreted. It catalyses the reaction an N-(acyl)-sphingosylphosphocholine = an N-(acyl)-sphingosyl-1,3-cyclic phosphate + choline. It carries out the reaction an N-(acyl)-sphingosylphosphoethanolamine = an N-(acyl)-sphingosyl-1,3-cyclic phosphate + ethanolamine. The enzyme catalyses a 1-acyl-sn-glycero-3-phosphocholine = a 1-acyl-sn-glycero-2,3-cyclic phosphate + choline. The catalysed reaction is a 1-acyl-sn-glycero-3-phosphoethanolamine = a 1-acyl-sn-glycero-2,3-cyclic phosphate + ethanolamine. In terms of biological role, dermonecrotic toxins cleave the phosphodiester linkage between the phosphate and headgroup of certain phospholipids (sphingolipid and lysolipid substrates), forming an alcohol (often choline) and a cyclic phosphate. This toxin acts on sphingomyelin (SM). It may also act on ceramide phosphoethanolamine (CPE), lysophosphatidylcholine (LPC) and lysophosphatidylethanolamine (LPE), but not on lysophosphatidylserine (LPS), and lysophosphatidylglycerol (LPG). It acts by transphosphatidylation, releasing exclusively cyclic phosphate products as second products. Induces dermonecrosis, hemolysis, increased vascular permeability, edema, inflammatory response, and platelet aggregation. In Sicarius patagonicus (Six-eyed sand spider), this protein is Dermonecrotic toxin SpaSicTox-betaIF1.